The primary structure comprises 290 residues: Probable protein phosphatase 2C 62 (290 aa).

The 251-residue stretch at 38-288 folds into the PPM-type phosphatase domain; sequence KHGYHLVKGK…DDISCIVVKF (251 aa). 4 residues coordinate Mn(2+): Asp75, Gly76, Asp240, and Asp279.

This sequence belongs to the PP2C family. It depends on Mg(2+) as a cofactor. Mn(2+) serves as cofactor.

It catalyses the reaction O-phospho-L-seryl-[protein] + H2O = L-seryl-[protein] + phosphate. The enzyme catalyses O-phospho-L-threonyl-[protein] + H2O = L-threonyl-[protein] + phosphate. The chain is Probable protein phosphatase 2C 62 from Oryza sativa subsp. japonica (Rice).